Here is a 539-residue protein sequence, read N- to C-terminus: MAKMIAFDEAARRALERGMNQLADAVKVTLGPKGRNVVLEKKWGAPTITNDGVSIAKEIELEDPYEKIGAELVKEVAKKTDDVAGDGTTTATVLAQTLVREGLRNVAAGANPMALKRGIEAATERVCQALLEIAKDVETREQIASTASISAGDTAVGEMIAEAMDKVGKEGVITVEESNTFGLELELTEGMRFDKGYISPYFVTDSERMEAVLEDPYILIANQKISAVKDLLPVLEKVMQAGKPLAIIAEDVEGEALATLVVNKIRGTFRSVAVKAPGFGDRRKAMLGDIAVLTGGQVISEEVGLKLENVGLDLLGRARKVVVTKDETTIVEGAGDPEQIAGRVNQIRAEIEKTDSDYDREKLQERLAKLAGGVAVIKVGAATEVELKERKHRIEDAVRNAKAAVEEGIVAGGGVALLQAGKTAFEKLDLEGDEATGARIVELALEAPLKQIAINAGLEGGVVVEKVRSLEPGWGLNAQTGEYVDMIKAGIIDPAKVTRSALQNAASIAGLFLTTEAVVAEKPEKEKTPAAPGGGDMDF.

ATP contacts are provided by residues 29–32, 86–90, Gly413, and Asp493; these read TLGP and DGTTT.

Belongs to the chaperonin (HSP60) family. Forms a cylinder of 14 subunits composed of two heptameric rings stacked back-to-back. Interacts with the co-chaperonin GroES.

The protein resides in the cytoplasm. It catalyses the reaction ATP + H2O + a folded polypeptide = ADP + phosphate + an unfolded polypeptide.. Its function is as follows. Together with its co-chaperonin GroES, plays an essential role in assisting protein folding. The GroEL-GroES system forms a nano-cage that allows encapsulation of the non-native substrate proteins and provides a physical environment optimized to promote and accelerate protein folding. The polypeptide is Chaperonin GroEL 1 (Acidothermus cellulolyticus (strain ATCC 43068 / DSM 8971 / 11B)).